The sequence spans 338 residues: NADPH dehydrogenase (338 aa).

An FMN-binding site is contributed by 22–25; that stretch reads SPMC. Residue Y27 participates in substrate binding. FMN is bound by residues A59 and Q101. A substrate-binding site is contributed by 163 to 166; that stretch reads HAAH. FMN contacts are provided by residues R214 and 306–307; that span reads GR.

It belongs to the NADH:flavin oxidoreductase/NADH oxidase family. NamA subfamily. Homotetramer. The cofactor is FMN.

The catalysed reaction is A + NADPH + H(+) = AH2 + NADP(+). Functionally, catalyzes the reduction of the double bond of an array of alpha,beta-unsaturated aldehydes and ketones. It also reduces the nitro group of nitroester and nitroaromatic compounds. It could have a role in detoxification processes. This is NADPH dehydrogenase from Listeria innocua serovar 6a (strain ATCC BAA-680 / CLIP 11262).